A 498-amino-acid polypeptide reads, in one-letter code: ATP synthase subunit beta, chloroplastic (498 aa).

Position 172 to 179 (172 to 179 (GGAGVGKT)) interacts with ATP.

It belongs to the ATPase alpha/beta chains family. F-type ATPases have 2 components, CF(1) - the catalytic core - and CF(0) - the membrane proton channel. CF(1) has five subunits: alpha(3), beta(3), gamma(1), delta(1), epsilon(1). CF(0) has four main subunits: a(1), b(1), b'(1) and c(9-12).

The protein resides in the plastid. Its subcellular location is the chloroplast thylakoid membrane. The catalysed reaction is ATP + H2O + 4 H(+)(in) = ADP + phosphate + 5 H(+)(out). Produces ATP from ADP in the presence of a proton gradient across the membrane. The catalytic sites are hosted primarily by the beta subunits. The sequence is that of ATP synthase subunit beta, chloroplastic from Phoenix dactylifera (Date palm).